Consider the following 792-residue polypeptide: Phosphatidylinositol 4-phosphate 5-kinase type-1 sktl (792 aa).

A compositionally biased stretch (basic and acidic residues) spans 1-21 (MDTRVELELEPVGKQDRLKDQ). Disordered regions lie at residues 1 to 74 (MDTR…QPGT), 105 to 139 (TQTP…KKLG), 423 to 446 (AKLQ…DAPE), 577 to 612 (TPTF…PTNA), and 640 to 714 (AAST…TDLS). Polar residues-rich tracts occupy residues 52–62 (QTASPDQEATP) and 105–131 (TQTP…STTG). Positions 155 to 573 (QSKQIMGSIQ…RFQDAMGKQV (419 aa)) constitute a PIPK domain. Residues 642 to 658 (STSSLQQQRSSNQSNNN) are compositionally biased toward low complexity. Residues 678-702 (EPSSTYHTQYSYDSSGRTGSALTSD) show a composition bias toward polar residues.

As to quaternary structure, interacts with ash2 (via B30.2/SPRY domain); the interaction is direct and seems to be specific for ash2 isoform B.

It localises to the cytoplasm. It is found in the cell cortex. The protein resides in the nucleus. The protein localises to the chromosome. Its subcellular location is the apical cell membrane. It localises to the cell projection. It is found in the cilium. The protein resides in the flagellum membrane. It carries out the reaction a 1,2-diacyl-sn-glycero-3-phospho-(1D-myo-inositol 4-phosphate) + ATP = a 1,2-diacyl-sn-glycero-3-phospho-(1D-myo-inositol-4,5-bisphosphate) + ADP + H(+). In terms of biological role, catalyzes the phosphorylation of phosphatidylinositol 4-phosphate (PtdIns[4]P) to form phosphatidylinositol 4,5-bisphosphate (PtdIns[4,5]P(2)), a lipid second messenger that regulates several cellular processes such as signal transduction, vesicle trafficking, actin cytoskeleton dynamics, cell adhesion, and cell motility. PtdIns[4,5]P(2) can directly act as a second messenger or can be utilized as a precursor to generate other second messengers: inositol 1,4,5-trisphosphate (IP3), diacylglycerol (DAG) or phosphatidylinositol-3,4,5-trisphosphate (PtdIns[3,4,5]P(3)). Required for germline development during oogenesis. Sktl is the major phosphatidylinositol 4-phosphate 5-kinase responsible for enrichment of PtdIns[4,5]P(2) in the apical plasma membrane of the oocyte and follicular epithelium cells of the egg chamber during oogenesis. Involved in nuclear anchoring and microtubule organization required for targeted mRNA transport during maintenance of oocyte polarity. The PtdIns[4,5]P(2) produced by sktl is required for maintenance of cellular polarity, prevention of the epithelial-mesenchymal transition process, maintenance of adherens junctions and regulation of apical constriction, probably by affecting polarized cortical recruitment of PAR proteins and their effectors, including baz/bazooka, aPKC, par-1 and l(2)gl. Involved in actin cytoskeleton organization probably through PtdIns[4,5]P(2)-mediated regulation of Moe/Moesin phosphorylation. Involved in PtdIns[4,5]P(2)-mediated apical recruitment of the formin dia/diaphanous in tubular epithelial cells. Involved in anterodorsal cell morphogenesis and eggshell dorsal appendage formation, probably through regulation of apical constriction by PtdIns[4,5]P(2) during tubulogenesis. Required for cell viability or proliferation during wing and eye imaginal disk development. May be involved in cytoskeletal regulation during sensory bristle development. Together with mys/integrin beta localizes to the trailing edge of larval epidermal cells in a JNK signaling-dependent manner during wound healing and is required for setting up cell polarity and re-epithelialization. Required for polarization of elongating spermatid cysts possibly by generation of PtdIns[4,5]P(2) involved in mediating membrane association and orientation of the nucleus-basal body pair. Probably involved in PtdIns[4,5]P(2)-mediated recruitment of exocyst proteins that may mediate membrane addition during spermatid elongation. Involved in maintenance of specialised cell contacts known as slit diaphragms required for nephrocyte morphogenesis and function. Regulates nephrocyte endocytosis, possibly through PtdIns[4,5]P(2)-mediated recruitment of effector proteins. Not required for nervous system development or neurotransmitter release at the neuromuscular junction. Together with ash2 probably plays a role in maintenance of transcriptionally active chromatin through down-regulation of histone H1 hyperphosphorylation. The sequence is that of Phosphatidylinositol 4-phosphate 5-kinase type-1 sktl from Drosophila melanogaster (Fruit fly).